The chain runs to 318 residues: Biotin synthase (318 aa).

One can recognise a Radical SAM core domain in the interval 44-273; it reads LCGNKFDLCT…TVQIRLAGGR (230 aa). [4Fe-4S] cluster is bound by residues cysteine 62, cysteine 66, and cysteine 69. Serine 106, cysteine 138, cysteine 198, and arginine 268 together coordinate [2Fe-2S] cluster.

Belongs to the radical SAM superfamily. Biotin synthase family. As to quaternary structure, homodimer. Requires [4Fe-4S] cluster as cofactor. [2Fe-2S] cluster serves as cofactor.

It carries out the reaction (4R,5S)-dethiobiotin + (sulfur carrier)-SH + 2 reduced [2Fe-2S]-[ferredoxin] + 2 S-adenosyl-L-methionine = (sulfur carrier)-H + biotin + 2 5'-deoxyadenosine + 2 L-methionine + 2 oxidized [2Fe-2S]-[ferredoxin]. The protein operates within cofactor biosynthesis; biotin biosynthesis; biotin from 7,8-diaminononanoate: step 2/2. Its function is as follows. Catalyzes the conversion of dethiobiotin (DTB) to biotin by the insertion of a sulfur atom into dethiobiotin via a radical-based mechanism. In Clostridium botulinum (strain Hall / ATCC 3502 / NCTC 13319 / Type A), this protein is Biotin synthase.